Here is a 509-residue protein sequence, read N- to C-terminus: MALPWYRVHTVVLNDPGRLISVHLMHTALVSGWAGSMALYELAVFDPSDPVLNPMWRQGMFVMPFMARLGVTDSWGGWSITGESVSNPGLWSFEGVALTHIVLSGLLFLASIWHWVYWDLDLFRDPRTLEPALDLPKVFGIHLVLSSLLCFGFGAFHVTGLFGPGIWISDAYGLTGRIQSVAPAWGPEGFNPFNPGGIASHHIAAGTVGILAGVFHLNVRPPQRLYRALRMGNIETVLSSSIAAVFFASFVVSGTMWYGAASTPIELFGPTRYQWDSGYFQQEIEKRVEESLSNGLSLPEAWSNIPDKLAFYDYIGNNPAKGGLFRAGPMNKGDGIAEAWLGHPVFQDKEGHELIVRRMPAFFENFPIILVDKDGIIRADIPFRRAESKYSIEQVGVTCSFYGGKLNNQSFKDASTVKKYARKAQFGEVFEFDRTILDSDGVFRSSPRGWFTFGHANFALLFFFGHLWHGSRTLFRDVFAGIGAEVTEQVEFGVFQKVGDKTTKKQGYV.

Transmembrane regions (helical) follow at residues 21–36 (SVHLMHTALVSGWAGS), 101–115 (IVLSGLLFLASIWHW), 140–156 (GIHLVLSSLLCFGFGAF), 203–218 (IAAGTVGILAGVFHLN), 237–252 (VLSSSIAAVFFASFVV), and 457–472 (NFALLFFFGHLWHGSR).

It belongs to the PsbB/PsbC family. PsbB subfamily. In terms of assembly, PSII is composed of 1 copy each of membrane proteins PsbA, PsbB, PsbC, PsbD, PsbE, PsbF, PsbH, PsbI, PsbJ, PsbK, PsbL, PsbM, PsbT, PsbY, PsbZ, Psb30/Ycf12, at least 3 peripheral proteins of the oxygen-evolving complex and a large number of cofactors. It forms dimeric complexes. It depends on Binds multiple chlorophylls. PSII binds additional chlorophylls, carotenoids and specific lipids. as a cofactor.

It localises to the plastid. The protein localises to the chloroplast thylakoid membrane. Functionally, one of the components of the core complex of photosystem II (PSII). It binds chlorophyll and helps catalyze the primary light-induced photochemical processes of PSII. PSII is a light-driven water:plastoquinone oxidoreductase, using light energy to abstract electrons from H(2)O, generating O(2) and a proton gradient subsequently used for ATP formation. The sequence is that of Photosystem II CP47 reaction center protein from Cyanidium caldarium (Red alga).